The chain runs to 53 residues: Dihydrolipoyl dehydrogenase (53 aa).

Residues Glu-35 to Cys-44 and Lys-53 contribute to the FAD site. Cysteines 44 and 49 form a disulfide.

It belongs to the class-I pyridine nucleotide-disulfide oxidoreductase family. As to quaternary structure, homodimer. FAD is required as a cofactor.

It localises to the mitochondrion. The enzyme catalyses N(6)-[(R)-dihydrolipoyl]-L-lysyl-[protein] + NAD(+) = N(6)-[(R)-lipoyl]-L-lysyl-[protein] + NADH + H(+). Lipoamide reduction and the NADH -&gt; NAD reaction are both completely inhibited by copper and cadmium ions. Lipoamide dehydrogenase is a component of the glycine cleavage system as well as of the alpha-ketoacid dehydrogenase complexes. This enzyme has lipoamide dehydrogenase activity and NADH -&gt; NAD transhydrogenation activity. Also displays some NADH-ferricyanide reductase and NADPH -&gt; NAD transydrogenation activities. The sequence is that of Dihydrolipoyl dehydrogenase from Hymenolepis diminuta (Rat tapeworm).